The primary structure comprises 227 residues: ATP-dependent dethiobiotin synthetase BioD (227 aa).

13–18 (DIGKTY) contacts ATP. T17 provides a ligand contact to Mg(2+). The active site involves K38. S42 lines the substrate pocket. ATP-binding positions include D55, 116 to 119 (EGSG), and 179 to 180 (NN). Residues D55 and E116 each coordinate Mg(2+).

Belongs to the dethiobiotin synthetase family. As to quaternary structure, homodimer. Mg(2+) is required as a cofactor.

Its subcellular location is the cytoplasm. It carries out the reaction (7R,8S)-7,8-diammoniononanoate + CO2 + ATP = (4R,5S)-dethiobiotin + ADP + phosphate + 3 H(+). Its pathway is cofactor biosynthesis; biotin biosynthesis; biotin from 7,8-diaminononanoate: step 1/2. Catalyzes a mechanistically unusual reaction, the ATP-dependent insertion of CO2 between the N7 and N8 nitrogen atoms of 7,8-diaminopelargonic acid (DAPA, also called 7,8-diammoniononanoate) to form a ureido ring. The chain is ATP-dependent dethiobiotin synthetase BioD from Clostridium botulinum (strain ATCC 19397 / Type A).